The sequence spans 239 residues: Type III pantothenate kinase (239 aa).

6 to 13 (DAGNTRLK) lines the ATP pocket. Residues Tyr-87 and 94–97 (GADR) each bind substrate. Asp-96 functions as the Proton acceptor in the catalytic mechanism. Thr-119 serves as a coordination point for ATP. Ser-169 serves as a coordination point for substrate.

It belongs to the type III pantothenate kinase family. Homodimer. It depends on NH4(+) as a cofactor. Requires K(+) as cofactor.

The protein localises to the cytoplasm. The enzyme catalyses (R)-pantothenate + ATP = (R)-4'-phosphopantothenate + ADP + H(+). Its pathway is cofactor biosynthesis; coenzyme A biosynthesis; CoA from (R)-pantothenate: step 1/5. Functionally, catalyzes the phosphorylation of pantothenate (Pan), the first step in CoA biosynthesis. This is Type III pantothenate kinase from Laribacter hongkongensis (strain HLHK9).